The primary structure comprises 386 residues: Citrate synthase (386 aa).

Active-site residues include H266 and D322.

It belongs to the citrate synthase family.

It catalyses the reaction oxaloacetate + acetyl-CoA + H2O = citrate + CoA + H(+). Its pathway is carbohydrate metabolism; tricarboxylic acid cycle; isocitrate from oxaloacetate: step 1/2. The polypeptide is Citrate synthase (gltA) (Acidithiobacillus ferridurans).